We begin with the raw amino-acid sequence, 92 residues long: Small ribosomal subunit protein bS20 (92 aa).

Residues 1–23 (MANTPSAKKRAKQAEKRRSHNAS) are disordered. Over residues 7–20 (AKKRAKQAEKRRSH) the composition is skewed to basic residues.

It belongs to the bacterial ribosomal protein bS20 family.

Its function is as follows. Binds directly to 16S ribosomal RNA. The protein is Small ribosomal subunit protein bS20 of Pseudomonas savastanoi pv. phaseolicola (strain 1448A / Race 6) (Pseudomonas syringae pv. phaseolicola (strain 1448A / Race 6)).